The primary structure comprises 116 residues: MKKKYRIKKNKEFQEVFQRGTSMANRQFVIYMLDRPEQPYFRIGLSVSKKLGKAVVRNRIKRYIRQVFLEMKDDIMPQKDYVIIARLPVAEMTYFEVKKSLLHVLRKAGALKRDIK.

The protein belongs to the RnpA family. In terms of assembly, consists of a catalytic RNA component (M1 or rnpB) and a protein subunit.

It carries out the reaction Endonucleolytic cleavage of RNA, removing 5'-extranucleotides from tRNA precursor.. Its function is as follows. RNaseP catalyzes the removal of the 5'-leader sequence from pre-tRNA to produce the mature 5'-terminus. It can also cleave other RNA substrates such as 4.5S RNA. The protein component plays an auxiliary but essential role in vivo by binding to the 5'-leader sequence and broadening the substrate specificity of the ribozyme. This chain is Ribonuclease P protein component, found in Geobacillus sp. (strain WCH70).